The following is a 393-amino-acid chain: 8-amino-7-oxononanoate synthase (393 aa).

Residue 108–109 (GF) coordinates pyridoxal 5'-phosphate. Histidine 133 is a binding site for substrate. Pyridoxal 5'-phosphate is bound by residues serine 182, 207–210 (DDAH), and 238–241 (TLSK). Lysine 241 bears the N6-(pyridoxal phosphate)lysine mark. Position 355 (threonine 355) interacts with substrate.

This sequence belongs to the class-II pyridoxal-phosphate-dependent aminotransferase family. BioF subfamily. Homodimer. Requires pyridoxal 5'-phosphate as cofactor.

The enzyme catalyses 6-carboxyhexanoyl-[ACP] + L-alanine + H(+) = (8S)-8-amino-7-oxononanoate + holo-[ACP] + CO2. The protein operates within cofactor biosynthesis; biotin biosynthesis. Functionally, catalyzes the decarboxylative condensation of pimeloyl-[acyl-carrier protein] and L-alanine to produce 8-amino-7-oxononanoate (AON), [acyl-carrier protein], and carbon dioxide. The polypeptide is 8-amino-7-oxononanoate synthase (Petrotoga mobilis (strain DSM 10674 / SJ95)).